Reading from the N-terminus, the 278-residue chain is 2-dehydro-3-deoxyphosphooctonate aldolase (278 aa).

It belongs to the KdsA family.

It localises to the cytoplasm. The catalysed reaction is D-arabinose 5-phosphate + phosphoenolpyruvate + H2O = 3-deoxy-alpha-D-manno-2-octulosonate-8-phosphate + phosphate. It functions in the pathway carbohydrate biosynthesis; 3-deoxy-D-manno-octulosonate biosynthesis; 3-deoxy-D-manno-octulosonate from D-ribulose 5-phosphate: step 2/3. The protein operates within bacterial outer membrane biogenesis; lipopolysaccharide biosynthesis. The chain is 2-dehydro-3-deoxyphosphooctonate aldolase from Fusobacterium nucleatum subsp. nucleatum (strain ATCC 25586 / DSM 15643 / BCRC 10681 / CIP 101130 / JCM 8532 / KCTC 2640 / LMG 13131 / VPI 4355).